The primary structure comprises 643 residues: Sodium/iodide cotransporter (643 aa).

The Extracellular portion of the chain corresponds to 1–14 (MEAVETGERPTFGA). Residues 15–31 (WDYGVFALMLLVSTGIG) traverse the membrane as a helical segment. Topologically, residues 32-56 (LWVGLARGGQRSAEDFFTGGRRLAA) are cytoplasmic. The chain crosses the membrane as a discontinuously helical span at residues 57 to 80 (LPVGLSLSASFMSAVQVLGVPSEA). Positions 69, 71, and 72 each coordinate Na(+). Position 76 (V76) interacts with iodide. The Extracellular segment spans residues 81–84 (YRYG). A helical membrane pass occupies residues 85-105 (LKFLWMCLGQLLNSVLTALLF). An iodide-binding site is contributed by M90. The Cytoplasmic segment spans residues 106 to 130 (MPVFYRLGLTSTYEYLEMRFSRAVR). The helical transmembrane segment at 131–157 (LCGTLQYIVATMLYTGIVIYAPALILN) threads the bilayer. Y144 is a Na(+) binding site. At 158 to 163 (QVTGLD) the chain is on the extracellular side. Residues 164–181 (IWASLLSTGIICTFYTAV) form a helical membrane-spanning segment. Topologically, residues 182–189 (GGMKAVVW) are cytoplasmic. Residues 190–208 (TDVFQVVVMLSGFWVVLAR) form a helical membrane-spanning segment. The Extracellular segment spans residues 209–243 (GVMLVGGPRQVLTLAQNHSRINLMDFNPDPRSRYT). A discontinuously helical transmembrane segment spans residues 244–266 (FWTFVVGGTLVWLSMYGVNQAQV). W255 contacts iodide. M258 contacts Na(+). The Cytoplasmic segment spans residues 267 to 278 (QRYVACRTEKQA). A helical transmembrane segment spans residues 279 to 301 (KLALLINQVGLFLIVSSAACCGI). Residues 302–335 (VMFVFYTDCDPLLLGRISAPDQYMPLLVLDIFED) lie on the Extracellular side of the membrane. Residues 336-363 (LPGVPGLFLACAYSGTLSTASTSINAMA) traverse the membrane as a helical segment. The Cytoplasmic segment spans residues 364 to 386 (AVTVEDLIKPRLRSLAPRKLVII). The chain crosses the membrane as a helical span at residues 387 to 408 (SKGLSLIYGSACLTVAALSSLL). Topologically, residues 409 to 411 (GGG) are extracellular. A helical membrane pass occupies residues 412-437 (VLQGSFTVMGVISGPLLGAFILGMFL). An iodide-binding site is contributed by L413. Na(+)-binding residues include S416 and F417. F417 serves as a coordination point for iodide. Residues 438 to 441 (PACN) are Cytoplasmic-facing. Residues 442–465 (TPGVLAGLGAGLALSLWVALGATL) traverse the membrane as a helical segment. The Extracellular portion of the chain corresponds to 466–525 (YPPSEQTMRVLPSSAARCVALSVNASGLLDPALLPANDSSRAPSSGMDASRPALADSFYA). 2 N-linked (GlcNAc...) asparagine glycosylation sites follow: N489 and N502. Residues 526–550 (ISYLYYGALGTLTTVLCGALISCLT) traverse the membrane as a helical segment. The Cytoplasmic portion of the chain corresponds to 551–643 (GPTKRSTLAP…GGRDQQETNL (93 aa)). At S556 the chain carries Phosphoserine; by PKA. The segment at 623–643 (AGSWTPCVGHDGGRDQQETNL) is disordered. The span at 633 to 643 (DGGRDQQETNL) shows a compositional bias: basic and acidic residues.

The protein belongs to the sodium:solute symporter (SSF) (TC 2.A.21) family. In terms of assembly, monomer. Glycosylated. In terms of tissue distribution, expression is primarily in thyroid tissue, but also to a lower extent in mammary gland and ovary. Expression is reduced in tumors.

The protein localises to the cell membrane. It is found in the cytoplasm. The enzyme catalyses iodide(out) + 2 Na(+)(out) = iodide(in) + 2 Na(+)(in). It catalyses the reaction chlorate(out) + 2 Na(+)(out) = chlorate(in) + 2 Na(+)(in). The catalysed reaction is thiocyanate(out) + 2 Na(+)(out) = thiocyanate(in) + 2 Na(+)(in). It carries out the reaction nitrate(out) + 2 Na(+)(out) = nitrate(in) + 2 Na(+)(in). The enzyme catalyses selenocyanate(out) + 2 Na(+)(out) = selenocyanate(in) + 2 Na(+)(in). Its activity is regulated as follows. Dysidenin and perchlorate inhibit iodide transport activity. Oxyanions inhibit iodide transport activity by blocking the binding sites for iodide and one of the sodium ions. In terms of biological role, sodium:iodide symporter that mediates the transport of iodide into the thyroid gland. Can also mediate the transport of chlorate, thiocynate, nitrate and selenocynate. The chain is Sodium/iodide cotransporter (SLC5A5) from Homo sapiens (Human).